A 623-amino-acid chain; its full sequence is MTEAKELLQDERFLKIQELNSAEPSKRHSVTYDNVILPQESVEVSPRSSTTSLEEPATTTATGVAVAAAAAAAEKKKKKKGEDGDDEQDEQAEEKYPVDPRMQKYLSHLKSKSRTRVHRKDASKYVSFFGDVSFDPRPTLLDSAVNVPFQTTFKGPVLEKQLKGLQQTKKGEVAAAAATAATAATAAAAPPGKKLESNFSGIYVFAWMFMGWIAFRSCMDYYVSHEGGFASMEIVQYMTSDLFTIALLDLALFLSTFFVVFVHWLVKLGFIRWKWTGFVAVSLFELCFIPVSFPVYVYYFHFSWVTRIFLFLHSVVLLMKAHSFAFYNGYLWDIKNELEFSSNKLNKFKESLSPETKDILQKSCDFCLFELNYQTKDNDFPNNISCSNYFMFCMFPVLVYQINYPRTSHIRWRYVLEKFCAIMGTIFLMMVTAQIFMHPVAMRCIEYHDTPSFGGWVPAVKQWLFLLFEMIPGFSVLYMLTFYMIWDALLNCVAELTRFADRYFYGDWWNCVSFEEFSRIWNVPVHKFLLRHVYHSSMGALHFSKAQATLFTFLLSAVFHEIAMFAIFKEVRGYLFLFQLSQFAWTALSNTKFLRSRPQLSNVVFTFGVCTGPSMIMTLYLTL.

Residues 20–99 (NSAEPSKRHS…EQAEEKYPVD (80 aa)) form a disordered region. The span at 57–72 (ATTTATGVAVAAAAAA) shows a compositional bias: low complexity. Over residues 83-92 (DGDDEQDEQA) the composition is skewed to acidic residues. The next 5 helical transmembrane spans lie at 195–215 (LESN…WIAF), 242–262 (LFTI…VVFV), 277–297 (GFVA…PVYV), 384–404 (ISCS…QINY), and 422–442 (IMGT…PVAM). An FYXDWWN motif motif is present at residues 504-510 (FYGDWWN). A run of 2 helical transmembrane segments spans residues 548–568 (ATLF…FAIF) and 603–623 (VVFT…YLTL). His560 is a catalytic residue.

It belongs to the membrane-bound acyltransferase family. Sterol o-acyltransferase subfamily.

The protein localises to the endoplasmic reticulum membrane. Functionally, sterol O-acyltransferase that catalyzes the formation of stery esters. This is Sterol O-acyltransferase 1 (ARE1) from Saccharomyces uvarum (strain ATCC 76518 / CBS 7001 / CLIB 283 / NBRC 10550 / MCYC 623 / NCYC 2669 / NRRL Y-11845) (Yeast).